The sequence spans 642 residues: Threonine--tRNA ligase (642 aa).

A TGS domain is found at Met-1–Thr-61. The catalytic stretch occupies residues Asp-243–Pro-534. Zn(2+) contacts are provided by Cys-334, His-385, and His-511.

It belongs to the class-II aminoacyl-tRNA synthetase family. In terms of assembly, homodimer. Zn(2+) serves as cofactor.

It is found in the cytoplasm. It catalyses the reaction tRNA(Thr) + L-threonine + ATP = L-threonyl-tRNA(Thr) + AMP + diphosphate + H(+). Catalyzes the attachment of threonine to tRNA(Thr) in a two-step reaction: L-threonine is first activated by ATP to form Thr-AMP and then transferred to the acceptor end of tRNA(Thr). Also edits incorrectly charged L-seryl-tRNA(Thr). The chain is Threonine--tRNA ligase from Shewanella baltica (strain OS155 / ATCC BAA-1091).